Consider the following 549-residue polypeptide: Probable protein kinase UbiB (549 aa).

One can recognise a Protein kinase domain in the interval 123 to 501 (DFNETPLASA…QQQAHKSNYL (379 aa)). ATP is bound by residues 129–137 (LASASISQV) and Lys-152. Asp-287 functions as the Proton acceptor in the catalytic mechanism. 2 consecutive transmembrane segments (helical) span residues 496 to 516 (HKSN…TLLI) and 520 to 540 (ATLW…FVGW).

It belongs to the ABC1 family. UbiB subfamily.

Its subcellular location is the cell inner membrane. Its pathway is cofactor biosynthesis; ubiquinone biosynthesis [regulation]. In terms of biological role, is probably a protein kinase regulator of UbiI activity which is involved in aerobic coenzyme Q (ubiquinone) biosynthesis. In Shewanella baltica (strain OS185), this protein is Probable protein kinase UbiB.